The chain runs to 122 residues: Large ribosomal subunit protein uL14 (122 aa).

Belongs to the universal ribosomal protein uL14 family. As to quaternary structure, part of the 50S ribosomal subunit. Forms a cluster with proteins L3 and L19. In the 70S ribosome, L14 and L19 interact and together make contacts with the 16S rRNA in bridges B5 and B8.

Binds to 23S rRNA. Forms part of two intersubunit bridges in the 70S ribosome. The polypeptide is Large ribosomal subunit protein uL14 (Sulfurovum sp. (strain NBC37-1)).